We begin with the raw amino-acid sequence, 258 residues long: Acyl-[acyl-carrier-protein]--UDP-N-acetylglucosamine O-acyltransferase (258 aa).

This sequence belongs to the transferase hexapeptide repeat family. LpxA subfamily. As to quaternary structure, homotrimer.

Its subcellular location is the cytoplasm. It carries out the reaction a (3R)-hydroxyacyl-[ACP] + UDP-N-acetyl-alpha-D-glucosamine = a UDP-3-O-[(3R)-3-hydroxyacyl]-N-acetyl-alpha-D-glucosamine + holo-[ACP]. The protein operates within glycolipid biosynthesis; lipid IV(A) biosynthesis; lipid IV(A) from (3R)-3-hydroxytetradecanoyl-[acyl-carrier-protein] and UDP-N-acetyl-alpha-D-glucosamine: step 1/6. Involved in the biosynthesis of lipid A, a phosphorylated glycolipid that anchors the lipopolysaccharide to the outer membrane of the cell. The sequence is that of Acyl-[acyl-carrier-protein]--UDP-N-acetylglucosamine O-acyltransferase from Pseudomonas fluorescens (strain ATCC BAA-477 / NRRL B-23932 / Pf-5).